Here is a 178-residue protein sequence, read N- to C-terminus: Cytochrome b6-f complex iron-sulfur subunit 3 (178 aa).

Residues 20 to 42 traverse the membrane as a helical segment; sequence FITGATVAVTAGAALYPAGKFLI. The 97-residue stretch at 65 to 161 folds into the Rieske domain; that stretch reads PASQILAEPP…VAVIDNSILI (97 aa). [2Fe-2S] cluster-binding residues include cysteine 107, histidine 109, cysteine 125, and histidine 128. Cysteine 112 and cysteine 127 are oxidised to a cystine.

The protein belongs to the Rieske iron-sulfur protein family. The 4 large subunits of the cytochrome b6-f complex are cytochrome b6, subunit IV (17 kDa polypeptide, PetD), cytochrome f and the Rieske protein, while the 4 small subunits are PetG, PetL, PetM and PetN. The complex functions as a dimer. [2Fe-2S] cluster is required as a cofactor.

It localises to the cellular thylakoid membrane. It catalyses the reaction 2 oxidized [plastocyanin] + a plastoquinol + 2 H(+)(in) = 2 reduced [plastocyanin] + a plastoquinone + 4 H(+)(out). In terms of biological role, component of the cytochrome b6-f complex, which mediates electron transfer between photosystem II (PSII) and photosystem I (PSI), cyclic electron flow around PSI, and state transitions. This chain is Cytochrome b6-f complex iron-sulfur subunit 3, found in Nostoc sp. (strain PCC 7120 / SAG 25.82 / UTEX 2576).